A 375-amino-acid polypeptide reads, in one-letter code: Actin, cytoplasmic (375 aa).

It belongs to the actin family.

The protein localises to the cytoplasm. It localises to the cytoskeleton. The enzyme catalyses ATP + H2O = ADP + phosphate + H(+). In terms of biological role, actins are highly conserved proteins that are involved in various types of cell motility and are ubiquitously expressed in all eukaryotic cells. The sequence is that of Actin, cytoplasmic (MIC-ACT-1) from Sterkiella nova (Ciliate).